Here is a 453-residue protein sequence, read N- to C-terminus: MSYQQPQLRGPLQRETDPSDRESLVSGHEHGGKSSQSAAVFNVVNSVIGSGIIGLPYSMKQAGFPLGILLLFWVSYITDFSLVLLIKGGALSGTDSYQSLVNKTFGFPGYLLLSTLQFMYPFIAMISYNIITGDTLSKVFQRLPGVDPGSWFISRHFIIVVSTVTCTLPLSLYRDIAKLGKISFISTILTAVILGVVVTRTISLGPNIPKTDNAWVFARPNAIQAIGVMSFAFICHHNCFLVYGSLEEPTVAKWRRVIHTSILVSVFICVLFATCGYFTFTGFTQGDLFENYCRSDDLVTFGRFCYGITVILTYPIECFVTREVITNVFFGGALSSVFHVTLTAAIVTAATLISLLIDCLGIVLELNGVLCAAPLIFIIPSACYLKLSEEPRTHSDKLMACVMFPVGAVVMVAGFVMAITNPQDCTHGQEMFYCFPDNISLTNISHSPRQLTA.

Positions 1 to 34 (MSYQQPQLRGPLQRETDPSDRESLVSGHEHGGKS) are disordered. Basic and acidic residues predominate over residues 12–32 (LQRETDPSDRESLVSGHEHGG). 11 helical membrane passes run 39–59 (AVFN…PYSM), 66–86 (LGIL…VLLI), 106–126 (GFPG…IAMI), 152–172 (FISR…PLSL), 179–199 (LGKI…VVVT), 222–242 (AIQA…CFLV), 262–282 (ILVS…TFTG), 299–319 (VTFG…IECF), 337–357 (VFHV…SLLI), 359–379 (CLGI…IFII), and 399–419 (MACV…VMAI).

Belongs to the amino acid/polyamine transporter 2 family. In terms of tissue distribution, widely expressed.

The protein resides in the membrane. Functionally, putative sodium-dependent amino acid/proton antiporter. In Rattus norvegicus (Rat), this protein is Putative sodium-coupled neutral amino acid transporter 11 (Slc38a11).